Consider the following 1433-residue polypeptide: Probable ATP-dependent RNA helicase spindle-E (1433 aa).

One can recognise a Helicase ATP-binding domain in the interval 126-294; it reads INAINENPVV…FANERSAPPV (169 aa). 139-146 contacts ATP; sequence GETGCGKT. Positions 240 to 243 match the DEAH box motif; the sequence is DEVH. In terms of domain architecture, Helicase C-terminal spans 355-526; that stretch reads TGKSYNQSLR…NCVLKAKELK (172 aa). The 64-residue stretch at 935 to 998 folds into the Tudor domain; it reads AGAITKGLML…RLMSQDLLRH (64 aa).

It belongs to the DEAD box helicase family. DEAH subfamily.

It localises to the cytoplasm. It catalyses the reaction ATP + H2O = ADP + phosphate + H(+). Its function is as follows. Probable ATP-binding RNA helicase which plays a central role during spermatogenesis and oogenesis by repressing transposable elements and preventing their mobilization, which is essential for the germline integrity. Acts via the piRNA metabolic process, which mediates the repression of transposable elements during meiosis by forming complexes composed of piRNAs and Piwi and govern the methylation and subsequent repression of transposons. Involved in the repression of LTR retrotransposon copia. Also involved in telomere regulation by repressing specialized telomeric retroelements HeT-A, TAHRE, and TART; Drosophila telomeres being maintained by transposition of specialized telomeric retroelements. Involved in telomeric trans-silencing, a repression mechanism by which a transposon or a transgene inserted in subtelomeric heterochromatin has the capacity to repress in trans in the female germline, a homologous transposon, or transgene located in euchromatin. Involved in the repression of testis-expressed Stellate genes by the homologous Su(Ste) repeats. Required for anteroposterior and dorsoventral axis formation during oogenesis. The polypeptide is Probable ATP-dependent RNA helicase spindle-E (spn-E) (Drosophila pseudoobscura pseudoobscura (Fruit fly)).